Here is a 1024-residue protein sequence, read N- to C-terminus: Beta-galactosidase (1024 aa).

Residues Asn103 and Asp202 each coordinate substrate. Asp202 is a Na(+) binding site. Residues Glu417, His419, and Glu462 each contribute to the Mg(2+) site. Residues Glu462 and 538–541 (EYAH) contribute to the substrate site. The active-site Proton donor is the Glu462. Catalysis depends on Glu538, which acts as the Nucleophile. Asn598 lines the Mg(2+) pocket. Residues Phe602 and Asn605 each coordinate Na(+). Residues Asn605 and Trp1000 each coordinate substrate.

The protein belongs to the glycosyl hydrolase 2 family. Homotetramer. The cofactor is Mg(2+). Na(+) serves as cofactor.

It catalyses the reaction Hydrolysis of terminal non-reducing beta-D-galactose residues in beta-D-galactosides.. This Escherichia coli O9:H4 (strain HS) protein is Beta-galactosidase.